The sequence spans 142 residues: Small ribosomal subunit protein uS9 (142 aa).

This sequence belongs to the universal ribosomal protein uS9 family. In terms of assembly, component of the small ribosomal subunit. Mature ribosomes consist of a small (40S) and a large (60S) subunit. The 40S subunit contains about 32 different proteins and 1 molecule of RNA (18S). The 60S subunit contains 45 different proteins and 3 molecules of RNA (25S, 5.8S and 5S).

The protein resides in the cytoplasm. Functionally, component of the ribosome, a large ribonucleoprotein complex responsible for the synthesis of proteins in the cell. The small ribosomal subunit (SSU) binds messenger RNAs (mRNAs) and translates the encoded message by selecting cognate aminoacyl-transfer RNA (tRNA) molecules. The large subunit (LSU) contains the ribosomal catalytic site termed the peptidyl transferase center (PTC), which catalyzes the formation of peptide bonds, thereby polymerizing the amino acids delivered by tRNAs into a polypeptide chain. The nascent polypeptides leave the ribosome through a tunnel in the LSU and interact with protein factors that function in enzymatic processing, targeting, and the membrane insertion of nascent chains at the exit of the ribosomal tunnel. This Candida albicans (strain SC5314 / ATCC MYA-2876) (Yeast) protein is Small ribosomal subunit protein uS9 (RPS16A).